Here is a 660-residue protein sequence, read N- to C-terminus: Bifunctional polymyxin resistance protein ArnA (660 aa).

The interval 1–304 (MKAVIFAYHD…TLGLVAGARL (304 aa)) is formyltransferase ArnAFT. H104 (proton donor; for formyltransferase activity) is an active-site residue. (6R)-10-formyltetrahydrofolate contacts are provided by residues R114 and 136-140 (VKRAD). Residues 314 to 660 (RRIRVLILGV…RSVDVAERAS (347 aa)) are dehydrogenase ArnADH. NAD(+) is bound by residues D347 and 368-369 (DI). UDP-alpha-D-glucuronate-binding positions include A393, Y398, and 432-433 (TS). The active-site Proton acceptor; for decarboxylase activity is the E434. UDP-alpha-D-glucuronate is bound by residues R460, N492, 526-535 (KLIDGGQQKR), and Y613. R619 serves as the catalytic Proton donor; for decarboxylase activity.

This sequence in the N-terminal section; belongs to the Fmt family. UDP-L-Ara4N formyltransferase subfamily. In the C-terminal section; belongs to the NAD(P)-dependent epimerase/dehydratase family. UDP-glucuronic acid decarboxylase subfamily. In terms of assembly, homohexamer, formed by a dimer of trimers.

It carries out the reaction UDP-alpha-D-glucuronate + NAD(+) = UDP-beta-L-threo-pentopyranos-4-ulose + CO2 + NADH. The enzyme catalyses UDP-4-amino-4-deoxy-beta-L-arabinose + (6R)-10-formyltetrahydrofolate = UDP-4-deoxy-4-formamido-beta-L-arabinose + (6S)-5,6,7,8-tetrahydrofolate + H(+). Its pathway is nucleotide-sugar biosynthesis; UDP-4-deoxy-4-formamido-beta-L-arabinose biosynthesis; UDP-4-deoxy-4-formamido-beta-L-arabinose from UDP-alpha-D-glucuronate: step 1/3. The protein operates within nucleotide-sugar biosynthesis; UDP-4-deoxy-4-formamido-beta-L-arabinose biosynthesis; UDP-4-deoxy-4-formamido-beta-L-arabinose from UDP-alpha-D-glucuronate: step 3/3. It functions in the pathway bacterial outer membrane biogenesis; lipopolysaccharide biosynthesis. In terms of biological role, bifunctional enzyme that catalyzes the oxidative decarboxylation of UDP-glucuronic acid (UDP-GlcUA) to UDP-4-keto-arabinose (UDP-Ara4O) and the addition of a formyl group to UDP-4-amino-4-deoxy-L-arabinose (UDP-L-Ara4N) to form UDP-L-4-formamido-arabinose (UDP-L-Ara4FN). The modified arabinose is attached to lipid A and is required for resistance to polymyxin and cationic antimicrobial peptides. This Salmonella choleraesuis (strain SC-B67) protein is Bifunctional polymyxin resistance protein ArnA.